The primary structure comprises 431 residues: Adenylosuccinate synthetase (431 aa).

GTP-binding positions include 13 to 19 and 41 to 43; these read GDEGKGK and GHT. Aspartate 14 (proton acceptor) is an active-site residue. Positions 14 and 41 each coordinate Mg(2+). Residues 14–17, 39–42, threonine 130, arginine 144, glutamine 225, threonine 240, and arginine 304 each bind IMP; these read DEGK and NAGH. Histidine 42 acts as the Proton donor in catalysis. Residue 300–306 coordinates substrate; that stretch reads ATTGRER. Residues arginine 306, 332–334, and 415–417 contribute to the GTP site; these read KLD and STG.

Belongs to the adenylosuccinate synthetase family. In terms of assembly, homodimer. Requires Mg(2+) as cofactor.

The protein resides in the cytoplasm. It carries out the reaction IMP + L-aspartate + GTP = N(6)-(1,2-dicarboxyethyl)-AMP + GDP + phosphate + 2 H(+). It functions in the pathway purine metabolism; AMP biosynthesis via de novo pathway; AMP from IMP: step 1/2. In terms of biological role, plays an important role in the de novo pathway of purine nucleotide biosynthesis. Catalyzes the first committed step in the biosynthesis of AMP from IMP. The sequence is that of Adenylosuccinate synthetase from Colwellia psychrerythraea (strain 34H / ATCC BAA-681) (Vibrio psychroerythus).